We begin with the raw amino-acid sequence, 354 residues long: Rhodopsin (354 aa).

The Extracellular portion of the chain corresponds to 1–36 (MNGTEGPNFYIPMSNKTGVVRSPFEYPQYYLAEPWQ). N-linked (GlcNAc...) asparagine glycans are attached at residues Asn2 and Asn15. The chain crosses the membrane as a helical span at residues 37–61 (YSILCAYMFLLILLGFPINFMTLYV). Residues 62–73 (TIQHKKLRTPLN) are Cytoplasmic-facing. The chain crosses the membrane as a helical span at residues 74-96 (YILLNLAFANHFMVLCGFTVTMY). The Extracellular segment spans residues 97 to 110 (SSMNGYFILGATGC). Cys110 and Cys187 are oxidised to a cystine. The chain crosses the membrane as a helical span at residues 111–133 (YVEGFFATLGGEIALWSLVVLAI). The short motif at 134 to 136 (ERY) is the 'Ionic lock' involved in activated form stabilization element. The Cytoplasmic portion of the chain corresponds to 134–152 (ERYVVVCKPMSNFRFSENH). A helical membrane pass occupies residues 153 to 173 (AVMGVAFTWIMALSCAVPPLL). Residues 174–202 (GWSRYIPEGMQCSCGVDYYTLKPEVNNES) lie on the Extracellular side of the membrane. Residues 203-224 (FVIYMFVVHFTIPLIIIFFCYG) traverse the membrane as a helical segment. Residues 225–252 (RLVCTVKEAAAQQQESATTQKAEKEVTR) are Cytoplasmic-facing. The helical transmembrane segment at 253–274 (MVIIMVVFFLICWVPYASVAFF) threads the bilayer. The Extracellular segment spans residues 275–286 (IFSNQGSEFGPI). A helical transmembrane segment spans residues 287-308 (FMTVPAFFAKSSSIYNPVIYIM). The residue at position 296 (Lys296) is an N6-(retinylidene)lysine. At 309 to 354 (LNKQFRNCMITTLCCGKNPFGEDDASSAATSKTEASSVSSSQVSPA) the chain is on the cytoplasmic side. S-palmitoyl cysteine attachment occurs at residues Cys322 and Cys323. Residues 331 to 354 (DDASSAATSKTEASSVSSSQVSPA) form a disordered region. Residues 334–354 (SSAATSKTEASSVSSSQVSPA) show a composition bias toward low complexity.

This sequence belongs to the G-protein coupled receptor 1 family. Opsin subfamily. Contains one covalently linked retinal chromophore. Upon light absorption, the covalently bound 11-cis-retinal is converted to all-trans-retinal. After hydrolysis of the Schiff base and release of the covalently bound all-trans-retinal, active rhodopsin is regenerated by binding of a fresh molecule of 11-cis-retinal.

Its subcellular location is the membrane. The protein localises to the cell projection. The protein resides in the cilium. It localises to the photoreceptor outer segment. Its function is as follows. Photoreceptor required for image-forming vision at low light intensity. Required for photoreceptor cell viability after birth. Light-induced isomerization of 11-cis to all-trans retinal triggers a conformational change that activates signaling via G-proteins. Subsequent receptor phosphorylation mediates displacement of the bound G-protein alpha subunit by arrestin and terminates signaling. The chain is Rhodopsin (RHO) from Bufo bufo (European toad).